The sequence spans 398 residues: uncharacterized protein (398 aa).

The signal sequence occupies residues 1–21 (MRKVGITLSVVALVIMGFVAG). Position 22 is an N-acetylcysteine (Cys-22). Cys-22 carries the S-archaeol cysteine lipid modification.

Belongs to the BMP lipoprotein family.

The protein resides in the cell membrane. This is an uncharacterized protein from Pyrococcus furiosus (strain ATCC 43587 / DSM 3638 / JCM 8422 / Vc1).